Here is a 181-residue protein sequence, read N- to C-terminus: Large ribosomal subunit protein uL5 (181 aa).

Belongs to the universal ribosomal protein uL5 family. As to quaternary structure, part of the 50S ribosomal subunit; part of the 5S rRNA/L5/L18/L25 subcomplex. Contacts the 5S rRNA and the P site tRNA. Forms a bridge to the 30S subunit in the 70S ribosome.

Functionally, this is one of the proteins that bind and probably mediate the attachment of the 5S RNA into the large ribosomal subunit, where it forms part of the central protuberance. In the 70S ribosome it contacts protein S13 of the 30S subunit (bridge B1b), connecting the 2 subunits; this bridge is implicated in subunit movement. Contacts the P site tRNA; the 5S rRNA and some of its associated proteins might help stabilize positioning of ribosome-bound tRNAs. The chain is Large ribosomal subunit protein uL5 from Trichodesmium erythraeum (strain IMS101).